Consider the following 187-residue polypeptide: MSPALQKGSSLMENRSPPSSFSIEHILGLDKKTDVASSPIIKHHRPWIECSSKGVVNGTCWQIPVIACDLPIQVHAVHRSEEEETKIRLEKCFGDEDRLTYKRELSWYRGRRPRTAFTRSQIEILENVFRVNSYPGIDVREELASKLALDEDRIQIWFQNRRAKLKRSHRESQFLIVKDSLSSKIQE.

Positions 110 to 169 (GRRPRTAFTRSQIEILENVFRVNSYPGIDVREELASKLALDEDRIQIWFQNRRAKLKRSH) form a DNA-binding region, homeobox.

This sequence belongs to the ANF homeobox family. The N-terminus interacts with the LIM 2 domain of zyx. In terms of tissue distribution, first expressed at a low level in the late blastula stage (stage 9) in most cells of the animal half of the embryo. Following this, predominantly expressed in two zones; the dorsal blastopore lip (Spemann organizer) at the beginning of gastrulation, and subsequently in the anterior part of the neural anlage (the region of future forebrain).

Its subcellular location is the nucleus. Functionally, regulates the earliest stages of development of the anterior neural plate. Plays a role in forebrain development by inhibiting the expression of otx2 and pax6 in the rostral region of the anterior neural plate. Necessary for both neural differentiation and neural patterning. Controls Spemann organizer development. May act as a transcriptional repressor. The chain is Homeobox expressed in ES cells 1-B (hesx1-b) from Xenopus laevis (African clawed frog).